The chain runs to 607 residues: Actin-related protein 8 (607 aa).

Over residues 1–12 the composition is skewed to polar residues; the sequence is MQRSRASSTSSG. Residues 1 to 27 form a disordered region; that stretch reads MQRSRASSTSSGRHPAPPPIGLPQPQA. The residue at position 9 (T9) is a Phosphothreonine. S11 bears the Phosphoserine mark. 278–281 contacts ATP; that stretch reads DIGA.

Belongs to the actin family. ARP8 subfamily. In terms of assembly, component of the chromatin remodeling Ino80 complex. Exists as monomers and dimers, but the dimer is most probably the biologically relevant form required for stable interactions with histones that exploits the twofold symmetry of the nucleosome core.

It localises to the nucleus. Its subcellular location is the cytoplasm. It is found in the cytoskeleton. Its function is as follows. Plays an important role in the functional organization of mitotic chromosomes. Exhibits low basal ATPase activity, and unable to polymerize. Functionally, proposed core component of the chromatin remodeling INO80 complex which is involved in transcriptional regulation, DNA replication and probably DNA repair. Strongly prefer nucleosomes and H3-H4 tetramers over H2A-H2B dimers, suggesting it may act as a nucleosome recognition module within the complex. This Drosophila melanogaster (Fruit fly) protein is Actin-related protein 8 (Arp8).